A 114-amino-acid chain; its full sequence is UPF0102 protein CD630_12710 (114 aa).

This sequence belongs to the UPF0102 family.

This Clostridioides difficile (strain 630) (Peptoclostridium difficile) protein is UPF0102 protein CD630_12710.